The primary structure comprises 100 residues: Urease subunit gamma (100 aa).

The protein belongs to the urease gamma subunit family. In terms of assembly, heterotrimer of UreA (gamma), UreB (beta) and UreC (alpha) subunits. Three heterotrimers associate to form the active enzyme.

Its subcellular location is the cytoplasm. It carries out the reaction urea + 2 H2O + H(+) = hydrogencarbonate + 2 NH4(+). The protein operates within nitrogen metabolism; urea degradation; CO(2) and NH(3) from urea (urease route): step 1/1. The sequence is that of Urease subunit gamma from Blochmanniella pennsylvanica (strain BPEN).